A 283-amino-acid polypeptide reads, in one-letter code: Pyridoxine/pyridoxal/pyridoxamine kinase (283 aa).

2 residues coordinate substrate: Ser23 and His59. An ATP-binding site is contributed by Asp125. Tyr136 is a Mg(2+) binding site. Residues Thr157, Glu162, Thr195, 222-225 (HAHV), and Thr232 each bind ATP. Position 162 (Glu162) interacts with Mg(2+). Residue Asp234 participates in substrate binding.

It belongs to the pyridoxine kinase family. PdxK subfamily. In terms of assembly, homodimer. It depends on Mg(2+) as a cofactor.

It catalyses the reaction pyridoxal + ATP = pyridoxal 5'-phosphate + ADP + H(+). The catalysed reaction is pyridoxine + ATP = pyridoxine 5'-phosphate + ADP + H(+). The enzyme catalyses pyridoxamine + ATP = pyridoxamine 5'-phosphate + ADP + H(+). Its pathway is cofactor metabolism; pyridoxal 5'-phosphate salvage; pyridoxal 5'-phosphate from pyridoxal: step 1/1. It functions in the pathway cofactor metabolism; pyridoxal 5'-phosphate salvage; pyridoxine 5'-phosphate from pyridoxine: step 1/1. The protein operates within cofactor metabolism; pyridoxal 5'-phosphate salvage; pyridoxamine 5'-phosphate from pyridoxamine: step 1/1. B6-vitamer kinase involved in the salvage pathway of pyridoxal 5'-phosphate (PLP). Catalyzes the phosphorylation of pyridoxine (PN), pyridoxal (PL), and pyridoxamine (PM), forming their respective 5'-phosphorylated esters, i.e. PNP, PLP and PMP. This Bordetella pertussis (strain Tohama I / ATCC BAA-589 / NCTC 13251) protein is Pyridoxine/pyridoxal/pyridoxamine kinase.